We begin with the raw amino-acid sequence, 477 residues long: Kinesin-like protein KIN-1 (477 aa).

In terms of domain architecture, Kinesin motor spans 3–330; sequence NVTVCVRFRP…VRFGTRTKLI (328 aa). Residue 86–93 participates in ATP binding; that stretch reads GQTGAGKT. Positions 402–451 form a coiled coil; that stretch reads QDAASQEVSLLTQAVEELKETVEELTDENERLRGELELAQEAAAAAAAAR.

Belongs to the TRAFAC class myosin-kinesin ATPase superfamily. Kinesin family. KIN-1 subfamily. As to expression, widely expressed. Expressed in young roots and leaves, in mature roots, culm, sheath and leaves, and in panicles at various developmental stages. Strongest expression is detected in panicles. In the panicle, expression is detected in anthers, glumme, lemma and palea. In the spikelet, expression is detected in both microsporocyte and the anther walls.

The protein resides in the cytoplasm. Functionally, kinesin-like motor protein that exhibits microtubule-stimulated ATPase activity. Plays an essential role in male meiotic chromosomal dynamics, male gametogenesis and anther dehiscence. May play a minor and nonessential role in regulating meiotic spindle formation. The polypeptide is Kinesin-like protein KIN-1 (Oryza sativa subsp. japonica (Rice)).